Here is a 507-residue protein sequence, read N- to C-terminus: Maturase K (507 aa).

This sequence belongs to the intron maturase 2 family. MatK subfamily.

Its subcellular location is the plastid. The protein resides in the chloroplast. In terms of biological role, usually encoded in the trnK tRNA gene intron. Probably assists in splicing its own and other chloroplast group II introns. The polypeptide is Maturase K (Calocedrus decurrens (California incense-cedar)).